A 427-amino-acid polypeptide reads, in one-letter code: tRNA(Ile)-lysidine synthase (427 aa).

29–34 (SGGVDS) is a binding site for ATP.

The protein belongs to the tRNA(Ile)-lysidine synthase family.

The protein resides in the cytoplasm. It catalyses the reaction cytidine(34) in tRNA(Ile2) + L-lysine + ATP = lysidine(34) in tRNA(Ile2) + AMP + diphosphate + H(+). Ligates lysine onto the cytidine present at position 34 of the AUA codon-specific tRNA(Ile) that contains the anticodon CAU, in an ATP-dependent manner. Cytidine is converted to lysidine, thus changing the amino acid specificity of the tRNA from methionine to isoleucine. This is tRNA(Ile)-lysidine synthase from Thermosipho africanus (strain TCF52B).